A 112-amino-acid polypeptide reads, in one-letter code: uncharacterized protein (112 aa).

The N-terminal 21 residues, 1–21 (MYLSAQLMRTVTASHLTLRAL), are a transit peptide targeting the mitochondrion.

Its subcellular location is the mitochondrion. This is an uncharacterized protein from Saccharomyces cerevisiae (strain ATCC 204508 / S288c) (Baker's yeast).